The primary structure comprises 837 residues: Outer membrane usher protein HifC (837 aa).

An N-terminal signal peptide occupies residues 1-26; it reads MKTKNFPLNKIAFACTLLLANPVAWA. Cys813 and Cys833 are disulfide-bonded.

Belongs to the fimbrial export usher family.

The protein resides in the cell outer membrane. Essential for piliation. The polypeptide is Outer membrane usher protein HifC (hifC) (Haemophilus influenzae).